The primary structure comprises 622 residues: MAHVRGLQLPGCLALAALCSLVHSQHVFLAPQQARSLLQRVRRANTFLEEVRKGNLERECVEETCSYEEAFEALESSTATDVFWAKYTACETARTPRDKLAACLEGNCAEGLGTNYRGHVNITRSGIECQLWRSRYPHKPEINSTTHPGADLQENFCRNPDSSTTGPWCYTTDPTVRRQECSIPVCGQDQVTVAMTPRSEGSSVNLSPPLEQCVPDRGQQYQGRLAVTTHGLPCLAWASAQAKALSKHQDFNSAVQLVENFCRNPDGDEEGVWCYVAGKPGDFGYCDLNYCEEAVEEETGDGLDEDSDRAIEGRTATSEYQTFFNPRTFGSGEADCGLRPLFEKKSLEDKTERELLESYIDGRIVEGSDAEIGMSPWQVMLFRKSPQELLCGASLISDRWVLTAAHCLLYPPWDKNFTENDLLVRIGKHSRTRYERNIEKISMLEKIYIHPRYNWRENLDRDIALMKLKKPVAFSDYIHPVCLPDRETAASLLQAGYKGRVTGWGNLKETWTANVGKGQPSVLQVVNLPIVERPVCKDSTRIRITDNMFCAGYKPDEGKRGDACEGDSGGPFVMKSPFNNRWYQMGIVSWGEGCDRDGKYGFYTHVFRLKKWIQKVIDQFGE.

An N-terminal signal peptide occupies residues 1-24 (MAHVRGLQLPGCLALAALCSLVHS). The propeptide occupies 25–43 (QHVFLAPQQARSLLQRVRR). A Gla domain is found at 44 to 89 (ANTFLEEVRKGNLERECVEETCSYEEAFEALESSTATDVFWAKYTA). 10 positions are modified to 4-carboxyglutamate: Glu49, Glu50, Glu57, Glu59, Glu62, Glu63, Glu68, Glu69, Glu72, and Glu75. A disulfide bridge links Cys60 with Cys65. 11 cysteine pairs are disulfide-bonded: Cys90–Cys103, Cys108–Cys186, Cys129–Cys169, Cys157–Cys181, Cys213–Cys291, Cys234–Cys274, Cys262–Cys286, Cys336–Cys482, Cys391–Cys407, Cys536–Cys550, and Cys564–Cys594. 2 Kringle domains span residues 108–186 (CAEG…IPVC) and 213–291 (CVPD…LNYC). 2 N-linked (GlcNAc...) (complex) asparagine glycosylation sites follow: Asn121 and Asn143. Residues 364 to 618 (IVEGSDAEIG…LKKWIQKVID (255 aa)) form the Peptidase S1 domain. Residue His406 is the Charge relay system of the active site. An N-linked (GlcNAc...) (complex) asparagine glycan is attached at Asn416. Asp462 serves as the catalytic Charge relay system. The segment at 551-573 (AGYKPDEGKRGDACEGDSGGPFV) is high affinity receptor-binding region which is also known as the TP508 peptide. Ser568 functions as the Charge relay system in the catalytic mechanism.

This sequence belongs to the peptidase S1 family. Heterodimer (named alpha-thrombin) of a light and a heavy chain; disulfide-linked. Forms a heterodimer with SERPINA5. In plasma, interacts (via N-terminus) with alpha-1-microglobulin with molar ratio 1:2 and 1:1; this interaction does not prevent the activation of prothrombin to thrombin. Interacts (thrombin) with iripin-8, a serine protease inhibitor from Ixodes ricinus saliva. Interacts (thrombin) with iripin-3, a serine protease inhibitor from Ixodes ricinus saliva. Interacts (thrombin) with Anopheles albimanus salivary thrombin inhibitor anophelin; the interaction results in thrombin inhibition. Interacts (thrombin) with Anopheles gambiae salivary thrombin inhibitor anophelin; the interaction results in thrombin inhibition. Interacts (thrombin) with Amblyomma variegatum variegin; the interaction results in thrombin inhibition. Interacts (thrombin) with Xenopsylla cheopis salivary thrombin inhibitor XC-42. Interacts (thrombin) with Xenopsylla cheopis salivary thrombin inhibitor XC-43. In terms of processing, the gamma-carboxyglutamyl residues, which bind calcium ions, result from the carboxylation of glutamyl residues by a microsomal enzyme, the vitamin K-dependent carboxylase. The modified residues are necessary for the calcium-dependent interaction with a negatively charged phospholipid surface, which is essential for the conversion of prothrombin to thrombin. N-glycosylated. N-glycan heterogeneity at Asn-121: Hex3HexNAc3 (minor), Hex4HexNAc3 (minor) and Hex5HexNAc4 (major). At Asn-143: Hex4HexNAc3 (minor) and Hex5HexNAc4 (major). Post-translationally, in the penultimate step of the coagulation cascade, prothrombin is converted to thrombin by the prothrombinase complex composed of factor Xa (F10), cofactor Va (F5), and phospholipids. This activation requires factor Xa-catalyzed sequential cleavage at 2 sites, Arg-314 and Arg-363, along 2 possible pathways. In the first pathway, the first cleavage occurs at Arg-314, leading to the formation of the inactive intermediate prethrombin-2. This pathway preferentially occurs on platelets and in the absence of cofactor Va. In the second pathway, the first cleavage occurs at Arg-363, which separates protease domain into 2 chains that remain connected through a disulfide bond and generates the active intermediate meizothrombin. The presence of cofactor Va directs activation along the meizothrombin pathway and greatly accelerates the rate of cleavage at Arg-363, but has a smaller effect on the cleavage of meizothrombin at Arg-314. Meizothrombin accumulates as an intermediate when prothrombinase is assembled on the membrane of red blood cells. In terms of tissue distribution, expressed by the liver and secreted in plasma.

Its subcellular location is the secreted. It localises to the extracellular space. The catalysed reaction is Selective cleavage of Arg-|-Gly bonds in fibrinogen to form fibrin and release fibrinopeptides A and B.. Activity is promoted in the presence of negatively charged surfaces, such as polyphosphate and dextran sulfate. Inhibited by SERPINA5. In terms of biological role, thrombin, which cleaves bonds after Arg and Lys, converts fibrinogen to fibrin and activates factors V, VII, VIII, XIII, and, in complex with thrombomodulin, protein C. Functions in blood homeostasis, inflammation and wound healing. Activates coagulation factor XI (F11); activation is promoted by the contact with negatively charged surfaces. Triggers the production of pro-inflammatory cytokines, such as MCP-1/CCL2 and IL8/CXCL8, in endothelial cells. This Homo sapiens (Human) protein is Prothrombin (F2).